A 33-amino-acid chain; its full sequence is Cytochrome b6-f complex subunit 6 (33 aa).

Residues 4 to 24 traverse the membrane as a helical segment; sequence ITIISYFGLLLASIIFTLVLF.

It belongs to the PetL family. As to quaternary structure, the 4 large subunits of the cytochrome b6-f complex are cytochrome b6, subunit IV (17 kDa polypeptide, PetD), cytochrome f and the Rieske protein, while the 4 small subunits are PetG, PetL, PetM and PetN. The complex functions as a dimer.

It localises to the plastid. Its subcellular location is the chloroplast thylakoid membrane. Component of the cytochrome b6-f complex, which mediates electron transfer between photosystem II (PSII) and photosystem I (PSI), cyclic electron flow around PSI, and state transitions. PetL is important for photoautotrophic growth as well as for electron transfer efficiency and stability of the cytochrome b6-f complex. This chain is Cytochrome b6-f complex subunit 6, found in Pinus mugo (Dwarf mountain pine).